The chain runs to 144 residues: Large ribosomal subunit protein uL16 (144 aa).

Over residues 1–19 (MLLPKRVKYRRQHRPKTTG) the composition is skewed to basic residues. Positions 1–23 (MLLPKRVKYRRQHRPKTTGRSKG) are disordered.

It belongs to the universal ribosomal protein uL16 family. Part of the 50S ribosomal subunit.

Its function is as follows. Binds 23S rRNA and is also seen to make contacts with the A and possibly P site tRNAs. This chain is Large ribosomal subunit protein uL16, found in Staphylococcus saprophyticus subsp. saprophyticus (strain ATCC 15305 / DSM 20229 / NCIMB 8711 / NCTC 7292 / S-41).